We begin with the raw amino-acid sequence, 283 residues long: uncharacterized protein (283 aa).

This sequence belongs to the glycosyltransferase 2 family. WaaE/KdtX subfamily.

This is an uncharacterized protein from Rickettsia felis (strain ATCC VR-1525 / URRWXCal2) (Rickettsia azadi).